A 329-amino-acid polypeptide reads, in one-letter code: Methionyl-tRNA formyltransferase (329 aa).

118–121 serves as a coordination point for (6S)-5,6,7,8-tetrahydrofolate; it reads SLLP.

It belongs to the Fmt family.

The catalysed reaction is L-methionyl-tRNA(fMet) + (6R)-10-formyltetrahydrofolate = N-formyl-L-methionyl-tRNA(fMet) + (6S)-5,6,7,8-tetrahydrofolate + H(+). Functionally, attaches a formyl group to the free amino group of methionyl-tRNA(fMet). The formyl group appears to play a dual role in the initiator identity of N-formylmethionyl-tRNA by promoting its recognition by IF2 and preventing the misappropriation of this tRNA by the elongation apparatus. In Corynebacterium urealyticum (strain ATCC 43042 / DSM 7109), this protein is Methionyl-tRNA formyltransferase.